We begin with the raw amino-acid sequence, 183 residues long: uncharacterized protein (183 aa).

A disordered region spans residues 1–23 (MGSSFVIDRSSSSPAPPRGPAPK).

This is an uncharacterized protein from Saccharomyces cerevisiae (strain ATCC 204508 / S288c) (Baker's yeast).